Consider the following 475-residue polypeptide: Probable proline--tRNA ligase, mitochondrial (475 aa).

A mitochondrion-targeting transit peptide spans 1-29 (MEGLLTRCRTLSALAACSLRHCRYIIHKC).

Belongs to the class-II aminoacyl-tRNA synthetase family.

The protein resides in the mitochondrion matrix. The catalysed reaction is tRNA(Pro) + L-proline + ATP = L-prolyl-tRNA(Pro) + AMP + diphosphate. Mitochondrial aminoacyl-tRNA synthetase that catalyzes the specific attachment of the proline amino acid (aa) to the homologous transfer RNA (tRNA), further participating in protein synthesis. The reaction occurs in a two steps: proline is first activated by ATP to form Pro-AMP and then transferred to the acceptor end of tRNA(Pro). The protein is Probable proline--tRNA ligase, mitochondrial (Pars2) of Mus musculus (Mouse).